A 141-amino-acid polypeptide reads, in one-letter code: Hemoglobin subunit alpha-A (141 aa).

A Globin domain is found at 1-141 (VLSPADKSNV…VGTVLTAKYR (141 aa)). His58 serves as a coordination point for O2. A heme b-binding site is contributed by His87.

The protein belongs to the globin family. Heterotetramer of two alpha chains and two beta chains. In terms of tissue distribution, red blood cells.

In terms of biological role, involved in oxygen transport from the lung to the various peripheral tissues. The chain is Hemoglobin subunit alpha-A (HBAA) from Passer montanus (Eurasian tree sparrow).